Reading from the N-terminus, the 862-residue chain is Protein translocase subunit SecA (862 aa).

Residues Gln88, 106–110 (GEGKT), and Asp506 each bind ATP. Zn(2+)-binding residues include Cys839, Cys841, Cys850, and His851.

Belongs to the SecA family. Monomer and homodimer. Part of the essential Sec protein translocation apparatus which comprises SecA, SecYEG and auxiliary proteins SecDF-YajC and YidC. Requires Zn(2+) as cofactor.

It localises to the cell inner membrane. The protein localises to the cytoplasm. It carries out the reaction ATP + H2O + cellular proteinSide 1 = ADP + phosphate + cellular proteinSide 2.. Its function is as follows. Part of the Sec protein translocase complex. Interacts with the SecYEG preprotein conducting channel. Has a central role in coupling the hydrolysis of ATP to the transfer of proteins into and across the cell membrane, serving as an ATP-driven molecular motor driving the stepwise translocation of polypeptide chains across the membrane. This is Protein translocase subunit SecA from Campylobacter jejuni subsp. jejuni serotype O:2 (strain ATCC 700819 / NCTC 11168).